The sequence spans 723 residues: Calpastatin (723 aa).

Disordered regions lie at residues 1-402 (MNPT…PGRC) and 422-509 (STHS…LPPL). Residues 21 to 30 (PNKKRHKKQA) show a composition bias toward basic residues. A Glycyl lysine isopeptide (Lys-Gly) (interchain with G-Cter in SUMO2) cross-link involves residue lysine 32. Residues 46–84 (VVHEKKTQEVKPKEHTEPKSQPKHPSDTRSKHAPKEKAV) show a composition bias toward basic and acidic residues. At lysine 50 the chain carries N6-acetyllysine. Composition is skewed to low complexity over residues 85–94 (SKSSEQPPSE) and 113–125 (SAVP…ASAE). Serine 87 carries the post-translational modification Phosphoserine. A Phosphothreonine modification is found at threonine 137. Acidic residues predominate over residues 157 to 173 (TALDDLIDTLGEPEETK). The Inhibitory domain 1 repeat unit spans residues 171–224 (ETKEDTTTYTGPEVSDPMSSTYIEELGKREVTLPPKYRELLNKEEGIAGPPPDS). Residues 195 to 216 (ELGKREVTLPPKYRELLNKEEG) are compositionally biased toward basic and acidic residues. 2 positions are modified to phosphoserine: serine 224 and serine 245. Basic and acidic residues-rich tracts occupy residues 249 to 263 (DAKK…EEAL) and 306 to 367 (PRPE…KPLS). An Inhibitory domain 2 repeat occupies 307–359 (RPELDPSSIKEVDEAKAKEEKVKKCGEDEERVPSEYRLKPATDKDGKPLLPEA). Residues serine 367, serine 369, and serine 376 each carry the phosphoserine modification. Over residues 378 to 396 (DFDRSKCKEKQSKPTEKNR) the composition is skewed to basic and acidic residues. Residue serine 443 is modified to Phosphoserine. Residues 445 to 504 (GKKEADPEDGKPVEDKVKEKAKEEDREKLGEREETIPPDYRLEEAKDKDGKPLPPKEVKE) show a composition bias toward basic and acidic residues. An Inhibitory domain 3 repeat occupies 449–502 (ADPEDGKPVEDKVKEKAKEEDREKLGEREETIPPDYRLEEAKDKDGKPLPPKEV). 2 positions are modified to phosphoserine: serine 519 and serine 530. A disordered region spans residues 547–723 (SQTPAPTTQA…KPKADGKSTS (177 aa)). Over residues 548–560 (QTPAPTTQAAGPP) the composition is skewed to low complexity. Over residues 562–571 (DSARDNKELD) the composition is skewed to basic and acidic residues. A phosphoserine mark is found at serine 578 and serine 580. Residues 586 to 642 (PDPDEHKPVEDKVKEKAKAEHRDKLGERDDTIPPKYQHLLDDNKEGTPGKPKRSESP) form an Inhibitory domain 4 repeat. A compositionally biased stretch (basic and acidic residues) spans 586 to 643 (PDPDEHKPVEDKVKEKAKAEHRDKLGERDDTIPPKYQHLLDDNKEGTPGKPKRSESPR). The segment covering 653 to 670 (NLQVPRTPLTPSQGTWTA) has biased composition (polar residues). Residues 672–690 (PQLQKPQQTQQRTKTRSLL) show a composition bias toward low complexity. Over residues 701 to 723 (KAKDSTKAKEETSKPKADGKSTS) the composition is skewed to basic and acidic residues.

The protein belongs to the protease inhibitor I27 (calpastatin) family.

Its function is as follows. Specific inhibition of calpain (calcium-dependent cysteine protease). Plays a key role in postmortem tenderization of meat and have been proposed to be involved in muscle protein degradation in living tissue. The protein is Calpastatin (CAST) of Ovis aries (Sheep).